Consider the following 400-residue polypeptide: MQELEQAVNRSVRVIPQGEGRVTIEKDLSSEEMILNMGPQHPSTHGVLRLECKTDGEVVTEAEPYLGYLHRCFEKHAEVVDYPGIVPFVDRMDYLAAMNSEFAYCIAVEKLLDVEIPRRVEFMRVIVSELNRIASHLVAIGTYAIDLGAFTPFLFCFRDREHIMSLLEWASGARMLYNYIWIGGASFDFPPGFKERTAEFVNYFRPKALELQRLLTENEIFVKRTKGIGMMPPDVAVNYGWSGPMLRGSGVEWDLRKHDPYSIYPELDFKVCVPDGKHSDIGDSLSRHLVRAYEMVESLSMIEQCLDKMPDANGFDPRSAIAKRIRPKAGEVYGRAENPRGELGFYIVSDGKSTKPVRCKARSSCFVNLSAMKELSMGQLIPDLVAIIGSIDIVLGEVDR.

The protein belongs to the complex I 49 kDa subunit family. In terms of assembly, NDH-1 is composed of 14 different subunits. Subunits NuoB, C, D, E, F, and G constitute the peripheral sector of the complex.

It localises to the cell inner membrane. It catalyses the reaction a quinone + NADH + 5 H(+)(in) = a quinol + NAD(+) + 4 H(+)(out). Functionally, NDH-1 shuttles electrons from NADH, via FMN and iron-sulfur (Fe-S) centers, to quinones in the respiratory chain. The immediate electron acceptor for the enzyme in this species is believed to be menaquinone. Couples the redox reaction to proton translocation (for every two electrons transferred, four hydrogen ions are translocated across the cytoplasmic membrane), and thus conserves the redox energy in a proton gradient. This is NADH-quinone oxidoreductase subunit D from Prosthecochloris aestuarii (strain DSM 271 / SK 413).